Reading from the N-terminus, the 349-residue chain is Isopentenyl-diphosphate delta-isomerase (349 aa).

6–7 (RK) is a substrate binding site. Residues 62–64 (AMT), serine 93, and asparagine 122 contribute to the FMN site. Position 152 (glutamine 152) interacts with substrate. Glutamate 153 is a binding site for Mg(2+). FMN is bound by residues lysine 184, threonine 214, 258 to 259 (GG), and 280 to 281 (AG).

Belongs to the IPP isomerase type 2 family. Homooctamer. Dimer of tetramers. FMN is required as a cofactor. Requires NADPH as cofactor. It depends on Mg(2+) as a cofactor.

It localises to the cytoplasm. It carries out the reaction isopentenyl diphosphate = dimethylallyl diphosphate. Involved in the biosynthesis of isoprenoids. Catalyzes the 1,3-allylic rearrangement of the homoallylic substrate isopentenyl (IPP) to its allylic isomer, dimethylallyl diphosphate (DMAPP). This chain is Isopentenyl-diphosphate delta-isomerase, found in Bacillus mycoides (strain KBAB4) (Bacillus weihenstephanensis).